A 149-amino-acid chain; its full sequence is Large ribosomal subunit protein bL9 (149 aa).

The protein belongs to the bacterial ribosomal protein bL9 family.

Its function is as follows. Binds to the 23S rRNA. This is Large ribosomal subunit protein bL9 from Citrobacter koseri (strain ATCC BAA-895 / CDC 4225-83 / SGSC4696).